The sequence spans 363 residues: MQLLQSSVIAATVGAALVAAVPVELEARDSCTFTSAADAKSGKTSCSTITLSNIEVPAGETLDLTGLNDGTTVIFSGETTFGYKEWEGPLISVSGTNIKVQQASGAKIDGDGSRWWDGKGGNGGKTKPKFCYVHKLDSSSITGLQIYNTPVQGFSIQSDNLNITDVTIDNSAGTAEGHNTDAFDVGSSTYINIDGATVYNQDDCLAINSGSHITFTNGYCDGGHGLSIGSVGGRSDNTVEDVTISNSKVVNSQNGVRIKTVYDATGTVSNVKFEDITLSGITKYGLIVEQDYENGSPTGTPTNGIKVSDITFDKVTGTVESDATDIYILCGSGSCTDWTWSGVSITGGKTSSKCENVPTGASC.

Residues M1–A20 form the signal peptide. The propeptide occupies V21–R28. A disulfide bridge connects residues C31 and C46. PbH1 repeat units follow at residues S158 to S187, S188 to S209, G210 to S230, V239 to T260, V268 to Q290, and T302 to G347. N162 carries N-linked (GlcNAc...) asparagine glycosylation. D202 (proton donor) is an active-site residue. A disulfide bridge connects residues C204 and C220. The active site involves H224. 2 disulfides stabilise this stretch: C330/C335 and C354/C363.

The protein belongs to the glycosyl hydrolase 28 family.

It localises to the secreted. The catalysed reaction is (1,4-alpha-D-galacturonosyl)n+m + H2O = (1,4-alpha-D-galacturonosyl)n + (1,4-alpha-D-galacturonosyl)m.. Functionally, involved in maceration and soft-rotting of plant tissue. Hydrolyzes the 1,4-alpha glycosidic bonds of de-esterified pectate in the smooth region of the plant cell wall. This is Endopolygalacturonase A (pgaA) from Aspergillus flavus (strain ATCC MYA-384 / AF70).